The primary structure comprises 591 residues: Cineole synthase 1, chloroplastic (591 aa).

The N-terminal 44 residues, 1-44 (MSSLIMQVVIPKPAKFFHNNLFSLSSKRHRFSTTTTTRGGRWAR), are a transit peptide targeting the chloroplast. (2E)-geranyl diphosphate is bound by residues arginine 308, aspartate 345, aspartate 349, arginine 486, and aspartate 489. 2 residues coordinate Mg(2+): aspartate 345 and aspartate 349. Positions 345-349 (DDVFD) match the DDXXD motif motif. Mg(2+) contacts are provided by aspartate 489, threonine 493, and glutamate 497.

Belongs to the terpene synthase family. Tpsb subfamily. In terms of assembly, monomer. Mg(2+) is required as a cofactor. It depends on Mn(2+) as a cofactor.

It is found in the plastid. It localises to the chloroplast. It catalyses the reaction (2E)-geranyl diphosphate + H2O = 1,8-cineole + diphosphate. The catalysed reaction is (2E)-geranyl diphosphate = alpha-pinene + diphosphate. It carries out the reaction (2E)-geranyl diphosphate = beta-pinene + diphosphate. The enzyme catalyses (2E)-geranyl diphosphate + H2O = (S)-alpha-terpineol + diphosphate. It catalyses the reaction (2E)-geranyl diphosphate = beta-myrcene + diphosphate. The catalysed reaction is (2E)-geranyl diphosphate = sabinene + diphosphate. The protein operates within secondary metabolite biosynthesis; terpenoid biosynthesis. In terms of biological role, monoterpene synthase (TPS) involved in the biosynthesis of monoterpene natural products, components of the chemical defense arsenal. Catalyzes the conversion of (2E)-geranyl diphosphate (GPP) into 1,8-cineole, and, as minor products, alpha-terpineol, beta-pinene, alpha-pinene, sabinene and myrcene. This is Cineole synthase 1, chloroplastic from Salvia fruticosa (Greek sage).